Consider the following 197-residue polypeptide: 3-isopropylmalate dehydratase small subunit (197 aa).

This sequence belongs to the LeuD family. LeuD type 1 subfamily. In terms of assembly, heterodimer of LeuC and LeuD.

It catalyses the reaction (2R,3S)-3-isopropylmalate = (2S)-2-isopropylmalate. The protein operates within amino-acid biosynthesis; L-leucine biosynthesis; L-leucine from 3-methyl-2-oxobutanoate: step 2/4. Catalyzes the isomerization between 2-isopropylmalate and 3-isopropylmalate, via the formation of 2-isopropylmaleate. The polypeptide is 3-isopropylmalate dehydratase small subunit (Mycolicibacterium vanbaalenii (strain DSM 7251 / JCM 13017 / BCRC 16820 / KCTC 9966 / NRRL B-24157 / PYR-1) (Mycobacterium vanbaalenii)).